Reading from the N-terminus, the 815-residue chain is MDGPRSDVGRWGGNPWQPPTTPSPEPEPEPEPERRSRRGGRSFWARCCGCCSCRNRADDDWGPEPHRDRGSGSGRRRPDSRGSDSRRPGSRASGVNAAGDGTIREGMLVVTGVDLLSSRSDQNRREHHTDEFEYDELIIRRGQPFHMVLHFSRPYESSDRVALELLIGNNPEVGKGTHVIIPVGKGGSGGWKAQVTKASGQNLNLRVHTSPNAIIGKFQFTVRTHSEAGEFQLPFDPHNEIYILFNPWCPEDIVYVDHEDWRQEYVLNESGRIYYGTEAQIGERTWNYGQFDHGVLDACLYILDRRGMPYGGRGDPVSVSRVISAMVNSLDDNGVLIGNWSGDYSRGTNPSAWVGSVEILLSYLRTGYSVPYGQCWVFAGVTTTVLRCLGLATRTVTNFNSAHDTDTSLTMDIYFDENMKPLEHLNHDSVWNFHVWNDCWMKRPDLPSGFDGWQVVDATPQETSSGIFCCGPCSVESIKNGLVYMKYDTPFIFAEVNSDKVYWQRQDDGSFKIVYVEEKAIGTLIVTKAVGSNMQDDVTHIYKHPEGSEAERKAVETAAAHGSKPNVYTNRDSAEDVALQVEAQDAVMGQDLTVSVVLTNRGSSTRTVKLHLYLSVTFYTGVTGPVFKESKKEVVLAPGATERVSMPVAYKEYRPQIVDQGSMLLNVSGHVKENGQVLAKQHTFRLRTPDLSLTLLGAAVVGQECEVQIVFKNPLPVTLTNVVFRLEGSGLQRPKILNVGDIGGNETVTLHQKFVPVRPGPRQLIASLDSPQLSQVHGVIQVDVAPAPGGGGFFSNAGGNSPLGETIPMASRGGA.

Disordered regions lie at residues 1–40 (MDGP…RRGG) and 59–100 (DDWG…AAGD). A compositionally biased stretch (pro residues) spans 16–25 (WQPPTTPSPE). Threonine 21 is modified (phosphothreonine). A phosphoserine mark is found at serine 23, serine 80, serine 83, serine 90, and serine 93. Positions 59 to 87 (DDWGPEPHRDRGSGSGRRRPDSRGSDSRR) are enriched in basic and acidic residues. Active-site residues include cysteine 375, histidine 434, and aspartate 457. Positions 497, 499, 546, and 551 each coordinate Ca(2+). Residues 795 to 815 (SNAGGNSPLGETIPMASRGGA) are disordered.

It belongs to the transglutaminase superfamily. Transglutaminase family. In terms of assembly, interacts with PLAAT4. Ca(2+) serves as cofactor. Post-translationally, palmitoylated. The membrane anchorage region possesses a cluster of five cysteines within which fatty acid(s) may become thioester-linked. It is subject to phorbol ester-stimulated phosphorylation and is hypersensitive to proteolysis, which releases the enzyme in a soluble form. In terms of processing, tyrosine-phosphorylated.

The protein resides in the membrane. It catalyses the reaction L-glutaminyl-[protein] + L-lysyl-[protein] = [protein]-L-lysyl-N(6)-5-L-glutamyl-[protein] + NH4(+). Catalyzes the cross-linking of proteins and the conjugation of polyamines to proteins. Responsible for cross-linking epidermal proteins during formation of the stratum corneum. Involved in cell proliferation. This is Protein-glutamine gamma-glutamyltransferase K (TGM1) from Canis lupus familiaris (Dog).